The chain runs to 495 residues: Glycerol kinase (495 aa).

Thr-16 is a binding site for ADP. Residues Thr-16 and Thr-17 each contribute to the ATP site. Thr-16 contributes to the sn-glycerol 3-phosphate binding site. Arg-20 provides a ligand contact to ADP. Sn-glycerol 3-phosphate contacts are provided by Arg-86, Glu-87, Tyr-138, and Asp-246. Positions 86, 87, 138, 246, and 247 each coordinate glycerol. Thr-268 and Gly-316 together coordinate ADP. ATP contacts are provided by Thr-268, Gly-316, Gln-320, and Gly-417. Positions 417 and 421 each coordinate ADP.

Belongs to the FGGY kinase family.

It catalyses the reaction glycerol + ATP = sn-glycerol 3-phosphate + ADP + H(+). Its pathway is polyol metabolism; glycerol degradation via glycerol kinase pathway; sn-glycerol 3-phosphate from glycerol: step 1/1. Its activity is regulated as follows. Inhibited by fructose 1,6-bisphosphate (FBP). Its function is as follows. Key enzyme in the regulation of glycerol uptake and metabolism. Catalyzes the phosphorylation of glycerol to yield sn-glycerol 3-phosphate. This chain is Glycerol kinase, found in Synechocystis sp. (strain ATCC 27184 / PCC 6803 / Kazusa).